The primary structure comprises 90 residues: Acylphosphatase (90 aa).

An Acylphosphatase-like domain is found at 5–90 (CVKASVKGIV…WRHIDGFEIK (86 aa)). Residues arginine 20 and asparagine 38 contribute to the active site.

The protein belongs to the acylphosphatase family.

The catalysed reaction is an acyl phosphate + H2O = a carboxylate + phosphate + H(+). The protein is Acylphosphatase (acyP) of Photobacterium profundum (strain SS9).